The sequence spans 163 residues: MASTYSFDIVSDFDRQELVNAVDQVIRDLKSRYDLKDTQTTVELGEEKITIGTDSEFTLESVHNILREKAAKRNLSQKIFDFGKVESASGNRVRQEITLKKGISQDIAKQISKLIRDEFKKVQASIQGDAVRVSAKAKDDLQTVIQRLKQEDYPVALQFTNYR.

The protein belongs to the YajQ family.

Nucleotide-binding protein. This is Nucleotide-binding protein Ava_2001 from Trichormus variabilis (strain ATCC 29413 / PCC 7937) (Anabaena variabilis).